Here is an 85-residue protein sequence, read N- to C-terminus: MAHKKAAGSTRNGRDSEAKRLGVKRFGGESVLAGNIIVRQRGTRFHAGSNMGIGKDHTLFALSDGKVQFEVKGPKSRKFVSIIAD.

The segment at Met-1–Arg-20 is disordered.

Belongs to the bacterial ribosomal protein bL27 family.

The protein is Large ribosomal subunit protein bL27 of Colwellia psychrerythraea (strain 34H / ATCC BAA-681) (Vibrio psychroerythus).